The chain runs to 164 residues: Endoribonuclease YbeY (164 aa).

Residues His111, His115, and His121 each contribute to the Zn(2+) site. The interval 142–164 is disordered; that stretch reads GYPDPYADDETETSPTVTTKDSE. Positions 154–164 are enriched in polar residues; the sequence is TSPTVTTKDSE.

It belongs to the endoribonuclease YbeY family. It depends on Zn(2+) as a cofactor.

Its subcellular location is the cytoplasm. In terms of biological role, single strand-specific metallo-endoribonuclease involved in late-stage 70S ribosome quality control and in maturation of the 3' terminus of the 16S rRNA. The chain is Endoribonuclease YbeY from Pseudomonas fluorescens (strain Pf0-1).